The sequence spans 594 residues: MVDIRKSLFFIIFFIFYNYVNSQKAINSDAFCQKKTITSICDPYLFNTDSIYIFNSTTTQESIELEIKRLLGFFSMLPSTCQVPSTYRLICNQYFQTCVPISKTDNSSTIAIPLRPCRESCDYGNGICGTQSITPCTGTFTEPTIYKFPVTSNVFDLSSLGGPSNYDLQCLNIDTMKAGNLNGTYISNNETVIVNQTCVYPLVYRNSTNREDDIKKGYQYLTETSDCLLPCPVPFFTENEWYQFKDLTTVTGVISFVCIFFNIFIYGFLNKKHDRHTIGILCLSFSLWCCMLSDLIVASSPDYSLVCPEPGRFARIHDSRCVANGIIFQWGAVCTTMFWSAMAIDLYLVIKKLSLPAFTVKYFVAAIFTLALLFTTVPLAWDDYGYGFGGVGCWIMSNSVQNGCFWIPMLICLLIGAVSICLIIYEIVKVFKNVGRSGISIILANARLFGIVSFIFIEYIYLFVYHFWVQENTEKFTQNITDWVICVQTTGSSDGCPLPKAVPYATQFIFLFFLRLLGIEVCIFYGINSRSKNIILESDLVNNKYFKAIRSKISSVGATSTTKNNTSTNNTSDQFNTSMFSVEVSKNGGDDDDL.

The N-terminal stretch at 1–22 is a signal peptide; the sequence is MVDIRKSLFFIIFFIFYNYVNS. At 23–248 the chain is on the extracellular side; that stretch reads QKAINSDAFC…NEWYQFKDLT (226 aa). The FZ domain occupies 27 to 173; that stretch reads NSDAFCQKKT…SNYDLQCLNI (147 aa). Intrachain disulfides connect Cys-32/Cys-98 and Cys-41/Cys-91. Residues Asn-55 and Asn-106 are each glycosylated (N-linked (GlcNAc...) asparagine). A disulfide bridge links Cys-117 with Cys-170. N-linked (GlcNAc...) asparagine glycosylation is found at Asn-182, Asn-189, Asn-195, and Asn-206. Residues 249–269 traverse the membrane as a helical segment; the sequence is TVTGVISFVCIFFNIFIYGFL. At 270–277 the chain is on the cytoplasmic side; the sequence is NKKHDRHT. A helical membrane pass occupies residues 278–298; sequence IGILCLSFSLWCCMLSDLIVA. Topologically, residues 299-329 are extracellular; it reads SSPDYSLVCPEPGRFARIHDSRCVANGIIFQ. A helical transmembrane segment spans residues 330-350; sequence WGAVCTTMFWSAMAIDLYLVI. Over 351–361 the chain is Cytoplasmic; sequence KKLSLPAFTVK. The helical transmembrane segment at 362 to 382 threads the bilayer; sequence YFVAAIFTLALLFTTVPLAWD. The Extracellular portion of the chain corresponds to 383–403; it reads DYGYGFGGVGCWIMSNSVQNG. Residues 404-424 traverse the membrane as a helical segment; it reads CFWIPMLICLLIGAVSICLII. Residues 425-448 are Cytoplasmic-facing; it reads YEIVKVFKNVGRSGISIILANARL. A helical transmembrane segment spans residues 449–469; it reads FGIVSFIFIEYIYLFVYHFWV. Residues 470–507 are Extracellular-facing; it reads QENTEKFTQNITDWVICVQTTGSSDGCPLPKAVPYATQ. Asn-479 carries N-linked (GlcNAc...) asparagine glycosylation. A helical transmembrane segment spans residues 508 to 528; sequence FIFLFFLRLLGIEVCIFYGIN. At 529–594 the chain is on the cytoplasmic side; sequence SRSKNIILES…SKNGGDDDDL (66 aa).

It belongs to the G-protein coupled receptor Fz/Smo family.

Its subcellular location is the membrane. The polypeptide is Frizzled and smoothened-like protein A (fslA) (Dictyostelium discoideum (Social amoeba)).